A 246-amino-acid polypeptide reads, in one-letter code: Uridylate kinase (246 aa).

Lys-18–Gly-21 provides a ligand contact to ATP. Position 60 (Gly-60) interacts with UMP. The ATP site is built by Gly-61 and Arg-65. Residues Asp-80 and Thr-141–Thr-148 contribute to the UMP site. ATP is bound by residues Thr-168, Gln-169, Tyr-174, and Asp-177.

This sequence belongs to the UMP kinase family. As to quaternary structure, homohexamer.

The protein resides in the cytoplasm. It catalyses the reaction UMP + ATP = UDP + ADP. It functions in the pathway pyrimidine metabolism; CTP biosynthesis via de novo pathway; UDP from UMP (UMPK route): step 1/1. With respect to regulation, inhibited by UTP. In terms of biological role, catalyzes the reversible phosphorylation of UMP to UDP. The sequence is that of Uridylate kinase from Gluconobacter oxydans (strain 621H) (Gluconobacter suboxydans).